The sequence spans 220 residues: N-(5'-phosphoribosyl)anthranilate isomerase (220 aa).

This sequence belongs to the TrpF family.

It carries out the reaction N-(5-phospho-beta-D-ribosyl)anthranilate = 1-(2-carboxyphenylamino)-1-deoxy-D-ribulose 5-phosphate. Its pathway is amino-acid biosynthesis; L-tryptophan biosynthesis; L-tryptophan from chorismate: step 3/5. The polypeptide is N-(5'-phosphoribosyl)anthranilate isomerase (Bordetella petrii (strain ATCC BAA-461 / DSM 12804 / CCUG 43448)).